Consider the following 344-residue polypeptide: Serpentine receptor class H-72 (344 aa).

7 consecutive transmembrane segments (helical) span residues 30–50 (GLAF…FFTG), 66–86 (LSLV…SFFI), 110–132 (TVVQ…TLLF), 155–175 (WLAG…FNLA), 221–241 (SIYM…LVIV), 259–279 (YGLI…SVLI), and 292–312 (LVSI…LLVH).

Belongs to the nematode receptor-like protein srh family.

Its subcellular location is the membrane. The chain is Serpentine receptor class H-72 (srh-72) from Caenorhabditis elegans.